The following is a 199-amino-acid chain: MYKFCANALKVILSLRGGVKVYNKENLPADSGFVIACTHSGWVDVITLGVGILPYQIHYMAKKELFQNKWIGSFLKKIHAFPVDRENPGPSSIKTPIKLLKEGEIVGIFPSGTRTSEDVPLKRGAVTIAQMGKAPLVPAAYQGPSSGKELFKKGKMKLIIGEPLHQADFAHLPSKERLAAMTEALNQRIKELENKLDQL.

The HXXXXD motif motif lies at 39–44 (HSGWVD).

Belongs to the 1-acyl-sn-glycerol-3-phosphate acyltransferase family.

It is found in the cell membrane. It catalyses the reaction a fatty acyl-[ACP] + a 1-acyl-sn-glycero-3-phosphate = a 1,2-diacyl-sn-glycero-3-phosphate + holo-[ACP]. It functions in the pathway lipid metabolism; phospholipid metabolism. In terms of biological role, converts lysophosphatidic acid (LPA) into phosphatidic acid (PA) by incorporating an acyl moiety at the 2 position. This enzyme utilizes acyl-ACP as fatty acyl donor, but not acyl-CoA. The polypeptide is 1-acyl-sn-glycerol-3-phosphate acyltransferase (plsC) (Bacillus subtilis (strain 168)).